The chain runs to 118 residues: Large ribosomal subunit protein uL22 (118 aa).

This sequence belongs to the universal ribosomal protein uL22 family. Part of the 50S ribosomal subunit.

In terms of biological role, this protein binds specifically to 23S rRNA; its binding is stimulated by other ribosomal proteins, e.g. L4, L17, and L20. It is important during the early stages of 50S assembly. It makes multiple contacts with different domains of the 23S rRNA in the assembled 50S subunit and ribosome. Functionally, the globular domain of the protein is located near the polypeptide exit tunnel on the outside of the subunit, while an extended beta-hairpin is found that lines the wall of the exit tunnel in the center of the 70S ribosome. This chain is Large ribosomal subunit protein uL22, found in Leuconostoc citreum (strain KM20).